We begin with the raw amino-acid sequence, 355 residues long: UDP-N-acetylglucosamine--N-acetylmuramyl-(pentapeptide) pyrophosphoryl-undecaprenol N-acetylglucosamine transferase (355 aa).

UDP-N-acetyl-alpha-D-glucosamine-binding positions include 15–17 (TGG), N127, R163, S191, I244, 263–268 (ALTVSE), and Q288.

The protein belongs to the glycosyltransferase 28 family. MurG subfamily.

The protein localises to the cell inner membrane. The catalysed reaction is di-trans,octa-cis-undecaprenyl diphospho-N-acetyl-alpha-D-muramoyl-L-alanyl-D-glutamyl-meso-2,6-diaminopimeloyl-D-alanyl-D-alanine + UDP-N-acetyl-alpha-D-glucosamine = di-trans,octa-cis-undecaprenyl diphospho-[N-acetyl-alpha-D-glucosaminyl-(1-&gt;4)]-N-acetyl-alpha-D-muramoyl-L-alanyl-D-glutamyl-meso-2,6-diaminopimeloyl-D-alanyl-D-alanine + UDP + H(+). It functions in the pathway cell wall biogenesis; peptidoglycan biosynthesis. In terms of biological role, cell wall formation. Catalyzes the transfer of a GlcNAc subunit on undecaprenyl-pyrophosphoryl-MurNAc-pentapeptide (lipid intermediate I) to form undecaprenyl-pyrophosphoryl-MurNAc-(pentapeptide)GlcNAc (lipid intermediate II). This Salmonella choleraesuis (strain SC-B67) protein is UDP-N-acetylglucosamine--N-acetylmuramyl-(pentapeptide) pyrophosphoryl-undecaprenol N-acetylglucosamine transferase.